A 177-amino-acid chain; its full sequence is Thymidine kinase (177 aa).

11–18 (GPMFSGKS) provides a ligand contact to ATP. Glu-83 serves as the catalytic Proton acceptor. A substrate-binding site is contributed by Phe-113. Residues Cys-138 and Cys-141 each contribute to the Zn(2+) site. 157 to 161 (IEIIG) contacts substrate. The Zn(2+) site is built by Cys-170 and Cys-173.

This sequence belongs to the thymidine kinase family. As to quaternary structure, homotetramer. Two molecules of substrate bind to each enzyme tetramer.

The enzyme catalyses thymidine + ATP = dTMP + ADP + H(+). In terms of biological role, phosphorylates thymidine and thymidine analogs, such as azidothymidine (AZT). Part of the salvage pathway for pyrimidine deoxyribonucleotide synthesis. The sequence is that of Thymidine kinase (OPG101) from Procyon lotor (Raccoon).